The primary structure comprises 184 residues: MKIAQEIRAGNVIMNGKDPMVVLKTEYSRGGRNSATVRMKLKSLIANFNTEVVFKADDKIDQVILDKKECTYSYFADPMYICMDTEYNQYEVEAENMGDSLNYLQDGMELEVVFYDGKAISVEVPTSVQREITWTEPAVKGDTSGKVLKPAKLATGFEIGVPIFVAQGDVVEIDTRTGEYRKRV.

The protein belongs to the elongation factor P family.

The protein localises to the cytoplasm. It participates in protein biosynthesis; polypeptide chain elongation. Functionally, involved in peptide bond synthesis. Stimulates efficient translation and peptide-bond synthesis on native or reconstituted 70S ribosomes in vitro. Probably functions indirectly by altering the affinity of the ribosome for aminoacyl-tRNA, thus increasing their reactivity as acceptors for peptidyl transferase. This is Elongation factor P from Polaromonas naphthalenivorans (strain CJ2).